Here is a 1031-residue protein sequence, read N- to C-terminus: Semaphorin-6A (1031 aa).

The signal sequence occupies residues 1–18 (MRPAALLLCLTLLHCAGA). The Extracellular portion of the chain corresponds to 19-649 (GFPEDSEPIS…KSNDQLVPVT (631 aa)). The 489-residue stretch at 24-512 (SEPISISHGN…FSTCVIKVPL (489 aa)) folds into the Sema domain. N-linked (GlcNAc...) asparagine glycans are attached at residues N33, N49, and N65. Intrachain disulfides connect C107–C117, C135–C144, C258–C369, and C283–C328. N282 carries N-linked (GlcNAc...) asparagine glycosylation. N-linked (GlcNAc...) asparagine glycans are attached at residues N434 and N461. 4 cysteine pairs are disulfide-bonded: C477/C506, C515/C533, C521/C568, and C525/C542. The chain crosses the membrane as a helical span at residues 650 to 670 (LLAIAVILAFVMGAVFSGIIV). The Cytoplasmic portion of the chain corresponds to 671-1031 (YCVCDHRRKD…TSMKPNDACT (361 aa)). S698 carries the post-translational modification Phosphoserine. 3 disordered regions span residues 754 to 777 (ALPTPESTPTLQQKRKPNRGSREW), 861 to 902 (SSKS…TGLS), and 914 to 1031 (GLEY…DACT). The span at 921 to 931 (YPTNSLTRSHQ) shows a compositional bias: polar residues. Residues 932 to 951 (TTTLKRNNTNSSNSSHLSRN) show a composition bias toward low complexity. A Phosphoserine modification is found at S953. Composition is skewed to polar residues over residues 971–998 (QVHSSQPSGQAVTVSRQPSLNAYNSLTR) and 1019–1031 (PLSTSMKPNDACT).

This sequence belongs to the semaphorin family. Active as a homodimer or oligomer. The SEMA6A homodimer interacts with a PLXNA2 homodimer, giving rise to a heterotetramer. Interacts with EVL. As to expression, particularly high levels in spinal cord, cerebellum, metencephalon, superior and inferior colliculus, diencephalon, olfactory bulb and eye.

It is found in the cell membrane. Cell surface receptor for PLXNA2 that plays an important role in cell-cell signaling. Required for normal granule cell migration in the developing cerebellum. Promotes reorganization of the actin cytoskeleton and plays an important role in axon guidance in the developing central nervous system. Can act as repulsive axon guidance cue. Has repulsive action towards migrating granular neurons. May play a role in channeling sympathetic axons into the sympathetic chains and controlling the temporal sequence of sympathetic target innervation. This Mus musculus (Mouse) protein is Semaphorin-6A (Sema6a).